We begin with the raw amino-acid sequence, 309 residues long: Tagatose-6-phosphate kinase (309 aa).

This sequence belongs to the carbohydrate kinase PfkB family. LacC subfamily.

It carries out the reaction D-tagatofuranose 6-phosphate + ATP = D-tagatofuranose 1,6-bisphosphate + ADP + H(+). It participates in carbohydrate metabolism; D-tagatose 6-phosphate degradation; D-glyceraldehyde 3-phosphate and glycerone phosphate from D-tagatose 6-phosphate: step 1/2. This is Tagatose-6-phosphate kinase from Streptococcus pyogenes serotype M5 (strain Manfredo).